The sequence spans 545 residues: Lysine--tRNA ligase (545 aa).

Positions 42–50 match the 'HIGH' region motif; it reads PSGVPHIGH. The short motif at 307 to 311 is the 'KMSKS' region element; it reads PLSSS.

This sequence belongs to the class-I aminoacyl-tRNA synthetase family.

The protein resides in the cytoplasm. The catalysed reaction is tRNA(Lys) + L-lysine + ATP = L-lysyl-tRNA(Lys) + AMP + diphosphate. In Haloarcula marismortui (strain ATCC 43049 / DSM 3752 / JCM 8966 / VKM B-1809) (Halobacterium marismortui), this protein is Lysine--tRNA ligase.